We begin with the raw amino-acid sequence, 116 residues long: MPDPAHIIAGHKAALSNPHVSEEAKERARKYLKEHGSESHYTTGTTRGQKADADDAGELREEGFGTKNQFEDNESQAKNLGNVRGGYKAAMHNPKVSQKGRRHAKELLEEVDDESK.

Residues 32–116 form a disordered region; the sequence is LKEHGSESHY…LLEEVDDESK (85 aa). A compositionally biased stretch (polar residues) spans 39 to 48; that stretch reads SHYTTGTTRG. Residues 49–64 show a composition bias toward basic and acidic residues; sequence QKADADDAGELREEGF.

It belongs to the UPF0654 (con-6) family.

The protein resides in the cytoplasm. It localises to the nucleus. This chain is UPF0654 protein C869.09, found in Schizosaccharomyces pombe (strain 972 / ATCC 24843) (Fission yeast).